We begin with the raw amino-acid sequence, 333 residues long: Protein APEM9 (333 aa).

Residues 1-90 (MEATDIWGEI…ELRDVFGEVA (90 aa)) are Cytoplasmic-facing. A helical transmembrane segment spans residues 91–102 (AIPVQVLLTGVC). The Peroxisomal portion of the chain corresponds to 103–268 (LQISNGSYLG…KVGNTQFSMS (166 aa)). Residues 269–285 (RGKVAVSLVGLIICYAL) form a helical membrane-spanning segment. Residues 286–333 (KRKRAALIRIIRRQMESTRKAIVDFWKLAFSYQVNPLAAIQSIPSTTT) lie on the Cytoplasmic side of the membrane.

Interacts with PEX6 and PEX19-1, but not with PEX1. Interacts (via N-terminus) with PEX13, and (via N-terminus and C-terminus) with PEX16. Expressed in roots, leaves, stems, flowers, buds and fruits.

It localises to the peroxisome membrane. Its function is as follows. Involved in peroxisome biogenesis and matrix protein import. Required for pollen maturation and in vivo germination via its role in peroxisomal function, which partially involves jasmonic acid biosynthesis. Transported to peroxisomes via the interaction with PEX19-1. Required for peroxisomal protein import by acting as an anchoring protein for the AAA ATPase complex, which consists of PEX1 and PEX6. The polypeptide is Protein APEM9 (Arabidopsis thaliana (Mouse-ear cress)).